The chain runs to 346 residues: 3-dehydroquinate synthase (346 aa).

NAD(+)-binding positions include 62–67 (DGEEYK), 96–100 (GVISD), 120–121 (TT), Lys133, Lys142, and 160–163 (FLRT). The Zn(2+) site is built by Glu175, His234, and His251.

It belongs to the sugar phosphate cyclases superfamily. Dehydroquinate synthase family. Co(2+) serves as cofactor. The cofactor is Zn(2+). It depends on NAD(+) as a cofactor.

It localises to the cytoplasm. It catalyses the reaction 7-phospho-2-dehydro-3-deoxy-D-arabino-heptonate = 3-dehydroquinate + phosphate. The protein operates within metabolic intermediate biosynthesis; chorismate biosynthesis; chorismate from D-erythrose 4-phosphate and phosphoenolpyruvate: step 2/7. Catalyzes the conversion of 3-deoxy-D-arabino-heptulosonate 7-phosphate (DAHP) to dehydroquinate (DHQ). In Campylobacter curvus (strain 525.92), this protein is 3-dehydroquinate synthase.